We begin with the raw amino-acid sequence, 59 residues long: Small, acid-soluble spore protein C1 (59 aa).

Belongs to the alpha/beta-type SASP family. SASP are degraded in the first minutes of spore germination and provide amino acids for both new protein synthesis and metabolism.

In terms of biological role, SASP are bound to spore DNA. They are double-stranded DNA-binding proteins that cause DNA to change to an a-like conformation. They protect the DNA backbone from chemical and enzymatic cleavage and are thus involved in dormant spore's high resistance to UV light. The chain is Small, acid-soluble spore protein C1 (sspC1) from Clostridium perfringens (strain 13 / Type A).